A 177-amino-acid chain; its full sequence is Phycocyanin-645 beta chain (177 aa).

Position 18 (Y18) interacts with mesobiliverdin. The (2R,3E)-phycocyanobilin site is built by K28, N35, and D39. 3 residues coordinate 15,16-dihydrobiliverdin: C50, D54, and C61. (2R,3E)-phycocyanobilin-binding residues include R77, C82, R84, and D85. Q148 provides a ligand contact to 15,16-dihydrobiliverdin. P154, G156, and C158 together coordinate (2R,3E)-phycocyanobilin.

The protein belongs to the phycobiliprotein family. In terms of assembly, heterotetramer of 2 different alpha chains and 2 identical beta chains which form 2 alpha-beta heterodimers within the heterotetramer. In terms of processing, contains two phycocyanobilin chromophores, one mesobiliverdin chromophore and one 15,16-dihydrobiliverdin chromophore with binding mediated by both the alpha and beta subunits.

It is found in the plastid. The protein resides in the chloroplast thylakoid membrane. Light-harvesting photosynthetic tetrapyrrole chromophore-protein from the phycobiliprotein complex. The sequence is that of Phycocyanin-645 beta chain from Chroomonas sp.